Here is a 380-residue protein sequence, read N- to C-terminus: MALRHLALLAGLLVGVASKSMENTVTRNSTAVINTQAEGTLSPPGLSSLPVVREWALTHTAQLPECCVDVVGVNASCPGASLCGPGCYRRWNADGSASCVRCGNGTLPAYNGSECRSFAGPGAPFPMNRSSGTPGRPHPGAPRVAASLFLGTFFISSGLILSVAGFFYLKRSSKLPRACYRRNKAPALQPGEAAAMIPPPQSSGNSSCRIPLWGFPSLGQSQGALWVCPQTGLPGSGSRPPLPGSPGDPPTRQGQGRIWLVPPALDLSWIWPAPPARPPLIPVTSMLFPVPETWGLQERRTHHDRADPQYLLLLEVQLHPRTDAAGLRQALLSSHRFSGAGSGGPKSQPVRKPRYVRRERPLDRATDPAAFPGEARISNV.

A signal peptide spans 1–18 (MALRHLALLAGLLVGVAS). N-linked (GlcNAc...) asparagine glycosylation is found at Asn104, Asn111, and Asn128. A helical transmembrane segment spans residues 148–168 (LFLGTFFISSGLILSVAGFFY). 2 disordered regions span residues 229–256 (PQTG…QGQG) and 336–380 (RFSG…ISNV). The span at 240-249 (PPLPGSPGDP) shows a compositional bias: pro residues. Residues 356 to 366 (VRRERPLDRAT) show a composition bias toward basic and acidic residues.

Its subcellular location is the membrane. This is an uncharacterized protein from Homo sapiens (Human).